Reading from the N-terminus, the 97-residue chain is Putative septation protein SpoVG (97 aa).

It belongs to the SpoVG family.

In terms of biological role, could be involved in septation. The chain is Putative septation protein SpoVG from Borreliella burgdorferi (strain ATCC 35210 / DSM 4680 / CIP 102532 / B31) (Borrelia burgdorferi).